A 630-amino-acid polypeptide reads, in one-letter code: Alpha-1,3-mannosyltransferase MNT3 (630 aa).

Over 1 to 14 (MLKSLKSRRLILKR) the chain is Cytoplasmic. Residues 15 to 31 (LVTLLLSLFFSYLIFSA) traverse the membrane as a helical; Signal-anchor for type II membrane protein segment. The Lumenal segment spans residues 32–630 (SRNVTSSNKL…NDISRTWNAN (599 aa)). 2 N-linked (GlcNAc...) asparagine glycosylation sites follow: N34 and N168.

This sequence belongs to the MNN1/MNT family.

Its subcellular location is the golgi apparatus membrane. It functions in the pathway protein modification; protein glycosylation. Functionally, mannosyltransferase involved in adding the 4th and 5th mannose residues of O-linked glycans. This chain is Alpha-1,3-mannosyltransferase MNT3 (MNT3), found in Saccharomyces cerevisiae (strain ATCC 204508 / S288c) (Baker's yeast).